A 106-amino-acid polypeptide reads, in one-letter code: Large ribosomal subunit protein bL21 (106 aa).

Belongs to the bacterial ribosomal protein bL21 family. As to quaternary structure, part of the 50S ribosomal subunit. Contacts protein L20.

This protein binds to 23S rRNA in the presence of protein L20. This chain is Large ribosomal subunit protein bL21, found in Chlamydia caviae (strain ATCC VR-813 / DSM 19441 / 03DC25 / GPIC) (Chlamydophila caviae).